Reading from the N-terminus, the 86-residue chain is MANSLRSEVIKLYKNLLYLGREYPKGADYFRRRLKAAFLKNKDETDPEKIKQLIARGEFVIKELEALYFLRKYRAMKKRYYSDDKP.

It belongs to the complex I LYR family.

The protein localises to the mitochondrion. Functionally, acts as a regulator of the electron transfer flavoprotein by promoting the removal of flavin from the ETF holoenzyme (composed of ETFA and ETFB). The protein is Electron transfer flavoprotein regulatory factor 1 of Taeniopygia guttata (Zebra finch).